A 355-amino-acid chain; its full sequence is Probable dual-specificity RNA methyltransferase RlmN 1 (355 aa).

The active-site Proton acceptor is Glu-91. The region spanning 99 to 336 (RADRAAGCLS…THLRRSRGPD (238 aa)) is the Radical SAM core domain. Cys-106 and Cys-341 are disulfide-bonded. [4Fe-4S] cluster is bound by residues Cys-113, Cys-117, and Cys-120. S-adenosyl-L-methionine contacts are provided by residues 163–164 (GE), Ser-195, 218–220 (SLH), and Asn-294. The active-site S-methylcysteine intermediate is Cys-341.

Belongs to the radical SAM superfamily. RlmN family. It depends on [4Fe-4S] cluster as a cofactor.

The protein localises to the cytoplasm. It carries out the reaction adenosine(2503) in 23S rRNA + 2 reduced [2Fe-2S]-[ferredoxin] + 2 S-adenosyl-L-methionine = 2-methyladenosine(2503) in 23S rRNA + 5'-deoxyadenosine + L-methionine + 2 oxidized [2Fe-2S]-[ferredoxin] + S-adenosyl-L-homocysteine. It catalyses the reaction adenosine(37) in tRNA + 2 reduced [2Fe-2S]-[ferredoxin] + 2 S-adenosyl-L-methionine = 2-methyladenosine(37) in tRNA + 5'-deoxyadenosine + L-methionine + 2 oxidized [2Fe-2S]-[ferredoxin] + S-adenosyl-L-homocysteine. Functionally, specifically methylates position 2 of adenine 2503 in 23S rRNA and position 2 of adenine 37 in tRNAs. The sequence is that of Probable dual-specificity RNA methyltransferase RlmN 1 from Opitutus terrae (strain DSM 11246 / JCM 15787 / PB90-1).